The chain runs to 172 residues: Ribosome maturation factor RimM (172 aa).

The region spanning glutamate 96 to leucine 169 is the PRC barrel domain.

It belongs to the RimM family. In terms of assembly, binds ribosomal protein uS19.

Its subcellular location is the cytoplasm. Functionally, an accessory protein needed during the final step in the assembly of 30S ribosomal subunit, possibly for assembly of the head region. Essential for efficient processing of 16S rRNA. May be needed both before and after RbfA during the maturation of 16S rRNA. It has affinity for free ribosomal 30S subunits but not for 70S ribosomes. This is Ribosome maturation factor RimM from Syntrophomonas wolfei subsp. wolfei (strain DSM 2245B / Goettingen).